Here is a 379-residue protein sequence, read N- to C-terminus: Pathogen-associated molecular patterns-induced protein A70 (379 aa).

Residues 7-29 form a helical membrane-spanning segment; sequence VASFFTPTTLFLLLNLMIGTIVV. A glycan (N-linked (GlcNAc...) asparagine) is linked at Asn-122. Residues 133 to 154 are disordered; the sequence is TGSDPHSHSHSHLDLHPDPAPA. Residues 137-149 show a composition bias toward basic and acidic residues; sequence PHSHSHSHLDLHP. Asn-170 is a glycosylation site (N-linked (GlcNAc...) asparagine). 2 disordered regions span residues 216-238 and 256-347; these read PEED…LTRA and SDPD…DGVD. Residues 221-231 are compositionally biased toward polar residues; sequence PTGTGVNSQIN. 2 stretches are compositionally biased toward basic and acidic residues: residues 256–285 and 322–335; these read SDPD…ESKK and SLER…RVER.

It is found in the membrane. The polypeptide is Pathogen-associated molecular patterns-induced protein A70 (Arabidopsis thaliana (Mouse-ear cress)).